The following is a 149-amino-acid chain: MMAVEQMPKKDWYSILGADPSANISDLKQKYQKLILMYHPDKQSTDVPAGTVEECVQKFIEIDQAWKILGNEETKREYDLQRCEDDLRNVGPVDAQVYLEEMSWNEGDHSFYLSCRCGGKYSVSKDEAEEVSLISCDTCSLIIELLHYN.

The J domain maps to 11-82 (DWYSILGADP…ETKREYDLQR (72 aa)). One can recognise a DPH-type MB domain in the interval 93–148 (VDAQVYLEEMSWNEGDHSFYLSCRCGGKYSVSKDEAEEVSLISCDTCSLIIELLHY). The Zn(2+) site is built by Cys115, Cys117, Cys136, and Cys139.

The protein belongs to the DPH4 family. As to quaternary structure, monomer and homooligomer. Iron binding promotes oligomerization.

The protein resides in the cytoplasm. It is found in the cytoskeleton. The protein operates within protein modification; peptidyl-diphthamide biosynthesis. Stimulates the ATPase activity of several Hsp70-type chaperones. This ability is enhanced by iron-binding. The iron-bound form is redox-active and can function as electron carrier. Plays a role in the diphthamide biosynthesis, a post-translational modification of histidine which occurs in translation elongation factor 2 (EEF2) which can be ADP-ribosylated by diphtheria toxin and by Pseudomonas exotoxin A (Eta). This is DnaJ homolog subfamily C member 24 from Homo sapiens (Human).